A 186-amino-acid chain; its full sequence is MAGVTDVQRLQARLEELERWVYGPGGSRGSRKVADGLVKVQVALGNIASKRERVKILYKKIEDLIKYLDPEYMDRIAIPDASKLQFILAEEQFILSQVALLEQVEALVPMLDSAHIKAVPEHAARLQRLAQIHIQQQDQCVEITEESKALLEEYNKTTMLLSKQFVQWDELLCQLEAAKQVKPAEE.

A2 is subject to N-acetylalanine.

The protein belongs to the dynactin subunit 3 family. Subunit of dynactin, a multiprotein complex part of a tripartite complex with dynein and a adapter, such as BICDL1, BICD2 or HOOK3. The dynactin complex is built around ACTR1A/ACTB filament and consists of an actin-related filament composed of a shoulder domain, a pointed end and a barbed end. Its length is defined by its flexible shoulder domain. The soulder is composed of 2 DCTN1 subunits, 4 DCTN2 and 2 DCTN3. The 4 DCNT2 (via N-terminus) bind the ACTR1A filament and act as molecular rulers to determine the length. The pointed end is important for binding dynein-dynactin cargo adapters. Consists of 4 subunits: ACTR10, DCNT4, DCTN5 and DCTN6. The barbed end is composed of a CAPZA1:CAPZB heterodimers, which binds ACTR1A/ACTB filament and dynactin and stabilizes dynactin.

It is found in the cytoplasm. The protein resides in the cytoskeleton. The protein localises to the microtubule organizing center. Its subcellular location is the centrosome. It localises to the chromosome. It is found in the centromere. The protein resides in the kinetochore. The protein localises to the spindle. Its subcellular location is the cleavage furrow. It localises to the midbody. Its function is as follows. Part of the dynactin complex that activates the molecular motor dynein for ultra-processive transport along microtubules. Together with dynein is involved in spindle assembly and cytokinesis. This chain is Dynactin subunit 3, found in Sus scrofa (Pig).